The sequence spans 87 residues: MVKNTLISVISEEEKRGSVEFQVFRFTNKIRRLTSHLELHKKDYLSQRGLRKILGKRQRLLAYLAKKNRVRYKELIGLLSIRETKTR.

The protein belongs to the universal ribosomal protein uS15 family. Part of the 30S ribosomal subunit.

It localises to the plastid. The protein localises to the chloroplast. This Coffea arabica (Arabian coffee) protein is Small ribosomal subunit protein uS15c (rps15).